The primary structure comprises 102 residues: Large ribosomal subunit protein bL21 (102 aa).

The protein belongs to the bacterial ribosomal protein bL21 family. Part of the 50S ribosomal subunit. Contacts protein L20.

In terms of biological role, this protein binds to 23S rRNA in the presence of protein L20. The chain is Large ribosomal subunit protein bL21 from Geobacter sp. (strain M21).